A 397-amino-acid chain; its full sequence is Major outer membrane porin, serovar L3 (397 aa).

The first 22 residues, 1-22, serve as a signal peptide directing secretion; it reads MKKLLKSVLVFAALSSASSLQA.

It belongs to the chlamydial porin (CP) (TC 1.B.2) family. Part of a disulfide cross-linked outer membrane complex (COMC) composed of the major outer membrane porin (MOMP), the small cysteine-rich protein (OmcA) and the large cysteine-rich periplasmic protein (OmcB).

The protein localises to the cell outer membrane. In terms of biological role, in elementary bodies (EBs, the infectious stage, which is able to survive outside the host cell) provides the structural integrity of the outer envelope through disulfide cross-links with the small cysteine-rich protein and the large cysteine-rich periplasmic protein. It has been described in publications as the Sarkosyl-insoluble COMC (Chlamydia outer membrane complex), and serves as the functional equivalent of peptidoglycan. Permits diffusion of specific solutes through the outer membrane. The chain is Major outer membrane porin, serovar L3 (ompA) from Chlamydia trachomatis.